Here is a 524-residue protein sequence, read N- to C-terminus: MSSGYKPGKKRKVQPVQPIKKELVDFYGCQIPKEYEPYLQRTNVSLIIKKGFINGMKNDAEMFCNDDLFELLMNELLNEQPGASFSSCVRQTANVATLPGVIKSLAMPDAHSGYGFSIGGVAAMRLDDPNAVICPGGVGFDINCGVRLLRTNLDDKDIEPHLVELADALQKNIPSGVGTTSNQTLTEKEMNEIMNEGLEWLVKKDLAWKEDLVYCEENGRIINSDPHLVSQKARGRGRNQLGTLGSGNHYLEIQRVDEIMDMEAAKQMGISHIGQICIMIHCGSRGLGHQVCQDFVDLCVNQSNKNEVDIQLTGVPFQSDNGQKYFKAMNAAANYAFANRGMISYHVRCTFEQVFKKSPKDLDMHLVYDVCHNIAKEEIHLIDGNEIKCIVHRKGATRAFAPLNPVIPDAYKPIGQPAIIGGSMGTCSYMLVGTQEGMKKTFGSTCHGAGRKISRVKAMKDISSNSVVEEMKKKGIELRITDPKLAAEEADGAYKDVKEVVETCQSAGISKIVFKLKPLIVVKG.

Mn(2+) is bound by residues Asp141, Cys144, His249, His281, and His372. 248 to 252 (NHYLE) is a GMP binding site. Residues 372-373 (HN), 421-424 (GGSM), Ser428, 447-450 (HGAG), and Lys523 contribute to the GMP site. His447 functions as the GMP-histidine intermediate in the catalytic mechanism.

It belongs to the RtcB family. In terms of assembly, catalytic component of the tRNA-splicing ligase complex. Requires Mn(2+) as cofactor.

The catalysed reaction is a 3'-end 3'-phospho-ribonucleotide-RNA + a 5'-end dephospho-ribonucleoside-RNA + GTP = a ribonucleotidyl-ribonucleotide-RNA + GMP + diphosphate. The enzyme catalyses a 3'-end 2',3'-cyclophospho-ribonucleotide-RNA + a 5'-end dephospho-ribonucleoside-RNA + GTP + H2O = a ribonucleotidyl-ribonucleotide-RNA + GMP + diphosphate + H(+). Functionally, catalytic subunit of the tRNA-splicing ligase complex that acts by directly joining spliced tRNA halves to mature-sized tRNAs by incorporating the precursor-derived splice junction phosphate into the mature tRNA as a canonical 3',5'-phosphodiester. May act as an RNA ligase with broad substrate specificity, and may function toward other RNAs. This is RNA-splicing ligase RtcB homolog 2 from Entamoeba dispar (strain ATCC PRA-260 / SAW760).